A 345-amino-acid polypeptide reads, in one-letter code: Protein RecA (345 aa).

Position 68–75 (68–75 (GVESSGKT)) interacts with ATP.

It belongs to the RecA family.

It localises to the cytoplasm. Functionally, can catalyze the hydrolysis of ATP in the presence of single-stranded DNA, the ATP-dependent uptake of single-stranded DNA by duplex DNA, and the ATP-dependent hybridization of homologous single-stranded DNAs. It interacts with LexA causing its activation and leading to its autocatalytic cleavage. The polypeptide is Protein RecA (Aquifex aeolicus (strain VF5)).